We begin with the raw amino-acid sequence, 341 residues long: MHIVLEFFLVTFRVLWAFVLAAAKWFVRPKDKNVAGQVCLITGAGSGLGRLFALEFARRRAQLVLWDINPQSNEETADMVRDIYRQLQAEDSARRANSSADEEVLPCCNLQVYTYTCDVGKRESVYSTAERVRREVGDVYLLLNNAGVVSGHHLLECPDELIERTMMVNCHAHFWTTKAFLPKMMEMNHGHIVSVASSLGLFSTAGVEDYCASKFGVVGFHESLSHELKAADKDGIKTTLVCPYLVDTGMFRGCRIRKEIEPFLPPLKPDYCVKQAMRAILTDQPMICTPRLMYIVLCMKSILPFEAVVCMYRFLGADKCMYPFIAQRKQATNNNETKNGI.

The chain crosses the membrane as a helical; Signal-anchor span at residues 3–23 (IVLEFFLVTFRVLWAFVLAAA). Position 40–64 (40–64 (LITGAGSGLGRLFALEFARRRAQLV)) interacts with NADP(+). S197 lines the substrate pocket. The active-site Proton acceptor is the Y210.

This sequence belongs to the short-chain dehydrogenases/reductases (SDR) family.

The protein resides in the microsome membrane. The protein localises to the endoplasmic reticulum membrane. It catalyses the reaction all-trans-retinol + NADP(+) = all-trans-retinal + NADPH + H(+). It functions in the pathway cofactor metabolism; retinol metabolism. Retinol dehydrogenase with a clear preference for NADP. Converts all-trans-retinol to all-trans-retinal. Has no detectable activity towards 11-cis-retinol, 9-cis-retinol and 13-cis-retinol. The polypeptide is Retinol dehydrogenase 10-B (rdh10-b) (Xenopus laevis (African clawed frog)).